Here is a 175-residue protein sequence, read N- to C-terminus: 19.0 kDa class II heat shock protein (175 aa).

The sHSP domain maps to 42–165; that stretch reads DRRAMANTPM…KPRVVEVKVA (124 aa). Residues 145–175 are disordered; that stretch reads TVDKKPPPEPKKPRVVEVKVAGAGEPKGKGK. Residues 146-161 show a composition bias toward basic and acidic residues; the sequence is VDKKPPPEPKKPRVVE.

The protein belongs to the small heat shock protein (HSP20) family. May form oligomeric structures.

Its subcellular location is the cytoplasm. The polypeptide is 19.0 kDa class II heat shock protein (HSP19.0) (Oryza sativa subsp. japonica (Rice)).